Consider the following 59-residue polypeptide: Small ribosomal subunit protein bS21 (59 aa).

Residues 36–59 form a disordered region; sequence EHYEKPSVKRKKKAEAAKRNKSKF. Over residues 43–59 the composition is skewed to basic residues; that stretch reads VKRKKKAEAAKRNKSKF.

Belongs to the bacterial ribosomal protein bS21 family.

The chain is Small ribosomal subunit protein bS21 from Alkaliphilus oremlandii (strain OhILAs) (Clostridium oremlandii (strain OhILAs)).